A 190-amino-acid chain; its full sequence is MTRSQKEKMLAGEMYNAADPEIQAELLLTGAWLKRYNDTLGDSAERWNGLLLERLGAVGLGAVIRPPFHCDYGFNIRIGAWVYINYNCVILDVAAVTIGDGTAIGPAVQIYTADHPHDPEQRQAGLQLGRPVSIGRHAWIGGGAIILPGVTIGDHAVIGAGSVVTRDVPAGSTAMGNPARVKAGGRLPKS.

The protein belongs to the transferase hexapeptide repeat family.

Functionally, acetyltransferase implicated in the O-acetylation of Nod factors. This Rhizobium leguminosarum bv. viciae protein is Nodulation protein L (nodL).